A 2271-amino-acid polypeptide reads, in one-letter code: Serine-rich adhesin for platelets (2271 aa).

A signal peptide spans 1–89; sequence MSKRQKAFHD…VNMLHDQQAF (89 aa). The tract at residues 90–230 is serine-rich repeat region 1, SRR1; sequence AASDAPLTSE…KTSTTSTSTA (141 aa). Positions 100–111 are enriched in polar residues; the sequence is LNTQSETVGNQN. Disordered regions lie at residues 100–229, 751–791, and 806–2243; these read LNTQ…STST, NSMS…VVST, and SVSA…GLLG. Low complexity predominate over residues 112–128; sequence STTIEASTSTADSTSVT. Polar residues predominate over residues 129–140; that stretch reads KNSSSVQTSNSD. A compositionally biased stretch (low complexity) spans 150–229; that stretch reads VTSTTNSTSN…NKTSTTSTST (80 aa). The tract at residues 231-751 is non-repeat region (NRR); sequence PVKLRTFSRL…TTFKYEVTRN (521 aa). Low complexity-rich tracts occupy residues 752–791, 806–1392, and 1402–2214; these read SMSD…VVST, SVSA…LSLS, and SNSA…ATSE. The tract at residues 752 to 2232 is serine-rich repeat region 2, SRR2; that stretch reads SMSDSVSTSG…AQSEKRLPDT (1481 aa). Positions 2229–2233 match the LPXTG sorting signal motif; that stretch reads LPDTG. Threonine 2232 carries the post-translational modification Pentaglycyl murein peptidoglycan amidated threonine. The propeptide at 2233–2271 is removed by sortase; the sequence is GDSIKQNGLLGGVMTLLVGLGLMKRKKKKDENDQDDSQA.

It belongs to the serine-rich repeat protein (SRRP) family. Post-translationally, proteolytically cleaved by a metalloprotease. In terms of processing, glycosylated. It is probable that most of the Ser residues in SSR1 and SSR2 are O-GlcNAcylated. Sequential glycosylation by sugar transferases are able to generate complex sugar polymorphisms.

The protein resides in the secreted. It localises to the cell wall. Its function is as follows. Mediates binding to human platelets, possibly through a receptor-ligand interaction. Probably associated with virulence in endovascular infection. This Staphylococcus aureus (strain USA300) protein is Serine-rich adhesin for platelets (sraP).